The primary structure comprises 276 residues: uncharacterized protein (276 aa).

One can recognise an AB hydrolase-1 domain in the interval 20–137; sequence PVLIFIPGAN…PPINTFLPDS (118 aa). Residues 57–76 form a disordered region; the sequence is GESELTEPLPDSASNPDSDY.

The protein belongs to the AB hydrolase superfamily.

This is an uncharacterized protein from Staphylococcus aureus (strain USA300).